A 165-amino-acid chain; its full sequence is uncharacterized protein (165 aa).

2 consecutive transmembrane segments (helical) span residues Leu7 to Val27 and Lys141 to Leu161.

Its subcellular location is the cell membrane. This is an uncharacterized protein from Archaeoglobus fulgidus (strain ATCC 49558 / DSM 4304 / JCM 9628 / NBRC 100126 / VC-16).